We begin with the raw amino-acid sequence, 183 residues long: Ribosome rescue factor SmrB (183 aa).

Positions 98–173 constitute a Smr domain; sequence LDLHGLTQKQ…GDAALLVLIE (76 aa).

Belongs to the SmrB family. Associates with collided ribosomes, but not with correctly translating polysomes.

Acts as a ribosome collision sensor. Detects stalled/collided disomes (pairs of ribosomes where the leading ribosome is stalled and a second ribosome has collided with it) and endonucleolytically cleaves mRNA at the 5' boundary of the stalled ribosome. Stalled/collided disomes form a new interface (primarily via the 30S subunits) that binds SmrB. Cleaved mRNA becomes available for tmRNA ligation, leading to ribosomal subunit dissociation and rescue of stalled ribosomes. The polypeptide is Ribosome rescue factor SmrB (Erwinia tasmaniensis (strain DSM 17950 / CFBP 7177 / CIP 109463 / NCPPB 4357 / Et1/99)).